The chain runs to 368 residues: Seipin-1 (368 aa).

3 helical membrane passes run 26–46 (WFMV…VVLS), 101–121 (VMVL…SLYV), and 292–312 (LCVW…LWCF). The segment at 344 to 368 (MERRRRERRNQPRRRNFATTQKSYT) is disordered. Positions 346-359 (RRRRERRNQPRRRN) are enriched in basic residues.

Belongs to the seipin family. In terms of tissue distribution, expressed in seeds and young seedlings. Not detected in leaves.

Its subcellular location is the endoplasmic reticulum membrane. Functionally, involved in lipid metabolism and lipid droplet (LD) morphology, number, and size. Facilitates the formation of large-sized LDs and modulates triacylglycerol accumulation. Induces probably a reorganization of the endoplasmic reticulum into LD-forming domains. In Arabidopsis thaliana (Mouse-ear cress), this protein is Seipin-1.